The sequence spans 277 residues: Phosphate import ATP-binding protein PstB 2 (277 aa).

The region spanning 31–272 (IEVPGLNLFY…PAKKQTEDYI (242 aa)) is the ABC transporter domain. 63-70 (GPSGCGKS) provides a ligand contact to ATP.

It belongs to the ABC transporter superfamily. Phosphate importer (TC 3.A.1.7) family. In terms of assembly, the complex is composed of two ATP-binding proteins (PstB), two transmembrane proteins (PstC and PstA) and a solute-binding protein (PstS).

It is found in the cell inner membrane. It carries out the reaction phosphate(out) + ATP + H2O = ADP + 2 phosphate(in) + H(+). Functionally, part of the ABC transporter complex PstSACB involved in phosphate import. Responsible for energy coupling to the transport system. This chain is Phosphate import ATP-binding protein PstB 2, found in Pseudomonas savastanoi pv. phaseolicola (strain 1448A / Race 6) (Pseudomonas syringae pv. phaseolicola (strain 1448A / Race 6)).